The primary structure comprises 500 residues: NAD(P)H-quinone oxidoreductase chain 4, chloroplastic (500 aa).

Transmembrane regions (helical) follow at residues 4 to 24, 37 to 57, 87 to 107, 113 to 130, 134 to 154, 167 to 187, 211 to 231, 242 to 262, 272 to 292, 305 to 325, 330 to 350, 386 to 406, 416 to 436, and 462 to 482; these read FPWLTIIVVFPISAGLSIFFL, ICICLLELLLMTYVFCYHFQL, IGPILLTGFITTLATLAAWPV, LFHFLMLAMYSGQIGLFS, LLLFFLMWELELIPVYLLLSM, FILYTAGGSVFLLMGVLGMGL, ILFYFGFLIAYAVKLPIIPLH, HYSTCMLLAGILLKMGAYGLV, AHSIFSPWLVLAGTLQIIYAA, IAYSSVSHMGFTIIGIGSITD, GAILQLLSHGFLGAALFFLAG, LALPGMSGFVAEAVVFFGIIT, ILITFVMAIGMILTPIYLLSM, and LFVSICIFLPVIGIGIYPDFV.

It belongs to the complex I subunit 4 family.

It localises to the plastid. Its subcellular location is the chloroplast thylakoid membrane. The catalysed reaction is a plastoquinone + NADH + (n+1) H(+)(in) = a plastoquinol + NAD(+) + n H(+)(out). It carries out the reaction a plastoquinone + NADPH + (n+1) H(+)(in) = a plastoquinol + NADP(+) + n H(+)(out). This is NAD(P)H-quinone oxidoreductase chain 4, chloroplastic from Acorus calamus var. americanus (American sweet flag).